The chain runs to 174 residues: Inner membrane protein p22 (174 aa).

The Intravirion portion of the chain corresponds to 1–7; it reads MLHIKMT. The chain crosses the membrane as a helical span at residues 8 to 28; sequence ISTLLIALIVLLIIILVVFLY. The Virion surface portion of the chain corresponds to 29–174; sequence HKKQQPPKKV…LYLPRNHKYA (146 aa).

It belongs to the asfivirus inner membrane protein p22 family.

Its subcellular location is the virion membrane. It is found in the host cell membrane. The chain is Inner membrane protein p22 from African swine fever virus (isolate Pig/Kenya/KEN-50/1950) (ASFV).